A 590-amino-acid polypeptide reads, in one-letter code: Protein NRT1/ PTR FAMILY 8.5 (590 aa).

The helical transmembrane segment at 96 to 116 (ASDVMIWQGTCYITPLIGAVI) threads the bilayer. Thr126 carries the phosphothreonine modification. 10 helical membrane-spanning segments follow: residues 130 to 150 (FSAI…LPVL), 168 to 188 (TVQY…TGGI), 214 to 234 (FFNW…TLLV), 242 to 262 (WGLG…SFFI), 365 to 385 (FPIW…STLF), 401 to 421 (IPPA…IPIY), 445 to 465 (MGIG…VETV), 478 to 498 (IFWQ…FFIG), 524 to 544 (AVGS…TALG), and 562 to 582 (FFWL…LICV).

It belongs to the major facilitator superfamily. Proton-dependent oligopeptide transporter (POT/PTR) (TC 2.A.17) family. Expressed in shoots, roots, stems, leaves, flowers and siliques.

The protein localises to the membrane. This Arabidopsis thaliana (Mouse-ear cress) protein is Protein NRT1/ PTR FAMILY 8.5 (NPF8.5).